The sequence spans 355 residues: Protein MGF 360-3L (355 aa).

One copy of the ANK repeat lies at 60 to 92 (KLNTALVLAVKENNYDLIVLFTEWGANINYALL).

It belongs to the asfivirus MGF 360 family.

Its function is as follows. Plays a role in virus cell tropism, and may be required for efficient virus replication in macrophages. The protein is Protein MGF 360-3L of Ornithodoros (relapsing fever ticks).